Reading from the N-terminus, the 77-residue chain is Large ribosomal subunit protein bL28 (77 aa).

The protein belongs to the bacterial ribosomal protein bL28 family.

The sequence is that of Large ribosomal subunit protein bL28 from Dechloromonas aromatica (strain RCB).